A 97-amino-acid chain; its full sequence is Large ribosomal subunit protein uL23 (97 aa).

This sequence belongs to the universal ribosomal protein uL23 family. In terms of assembly, part of the 50S ribosomal subunit. Contacts protein L29, and trigger factor when it is bound to the ribosome.

Functionally, one of the early assembly proteins it binds 23S rRNA. One of the proteins that surrounds the polypeptide exit tunnel on the outside of the ribosome. Forms the main docking site for trigger factor binding to the ribosome. This chain is Large ribosomal subunit protein uL23, found in Brucella anthropi (strain ATCC 49188 / DSM 6882 / CCUG 24695 / JCM 21032 / LMG 3331 / NBRC 15819 / NCTC 12168 / Alc 37) (Ochrobactrum anthropi).